We begin with the raw amino-acid sequence, 127 residues long: UPF0102 protein Cpha266_0037 (127 aa).

It belongs to the UPF0102 family.

This chain is UPF0102 protein Cpha266_0037, found in Chlorobium phaeobacteroides (strain DSM 266 / SMG 266 / 2430).